Reading from the N-terminus, the 377-residue chain is Chaperone protein DnaJ (377 aa).

The J domain occupies 4–69 (DYYEALGVTR…QKRAAYDRFG (66 aa)). A CR-type zinc finger spans residues 135–213 (GKTAQIRVPT…CHGQGRVTQE (79 aa)). Cys-148, Cys-151, Cys-165, Cys-168, Cys-187, Cys-190, Cys-201, and Cys-204 together coordinate Zn(2+). 4 CXXCXGXG motif repeats span residues 148 to 155 (CDECSGSG), 165 to 172 (CTMCSGSG), 187 to 194 (CPGCNGRG), and 201 to 208 (CEKCHGQG).

Belongs to the DnaJ family. In terms of assembly, homodimer. Zn(2+) is required as a cofactor.

Its subcellular location is the cytoplasm. Participates actively in the response to hyperosmotic and heat shock by preventing the aggregation of stress-denatured proteins and by disaggregating proteins, also in an autonomous, DnaK-independent fashion. Unfolded proteins bind initially to DnaJ; upon interaction with the DnaJ-bound protein, DnaK hydrolyzes its bound ATP, resulting in the formation of a stable complex. GrpE releases ADP from DnaK; ATP binding to DnaK triggers the release of the substrate protein, thus completing the reaction cycle. Several rounds of ATP-dependent interactions between DnaJ, DnaK and GrpE are required for fully efficient folding. Also involved, together with DnaK and GrpE, in the DNA replication of plasmids through activation of initiation proteins. This is Chaperone protein DnaJ from Brucella abortus (strain S19).